The sequence spans 274 residues: NH(3)-dependent NAD(+) synthetase (274 aa).

Residue 46–53 (GISGGQDS) coordinates ATP. D52 contacts Mg(2+). Residue R140 coordinates deamido-NAD(+). An ATP-binding site is contributed by T160. E165 contacts Mg(2+). Positions 173 and 180 each coordinate deamido-NAD(+). Residues K189 and T211 each contribute to the ATP site. Deamido-NAD(+) is bound at residue 260–261 (HK).

The protein belongs to the NAD synthetase family. Homodimer.

The enzyme catalyses deamido-NAD(+) + NH4(+) + ATP = AMP + diphosphate + NAD(+) + H(+). The protein operates within cofactor biosynthesis; NAD(+) biosynthesis; NAD(+) from deamido-NAD(+) (ammonia route): step 1/1. Catalyzes the ATP-dependent amidation of deamido-NAD to form NAD. Uses ammonia as a nitrogen source. This is NH(3)-dependent NAD(+) synthetase from Rhodococcus erythropolis (strain PR4 / NBRC 100887).